Consider the following 500-residue polypeptide: Replication factor C large subunit (500 aa).

44–51 is a binding site for ATP; that stretch reads GSPGVGKT. Positions 443 to 500 are disordered; the sequence is HAADDLGASDGETTNASGTASSSGDDGDADGTTDGDGSDANDGNDDDDDGQAGLSDFV. The span at 455-466 shows a compositional bias: low complexity; sequence TTNASGTASSSG. Acidic residues predominate over residues 467–492; it reads DDGDADGTTDGDGSDANDGNDDDDDG.

This sequence belongs to the activator 1 small subunits family. RfcL subfamily. As to quaternary structure, heteromultimer composed of small subunits (RfcS) and large subunits (RfcL).

Part of the RFC clamp loader complex which loads the PCNA sliding clamp onto DNA. In Halorubrum lacusprofundi (strain ATCC 49239 / DSM 5036 / JCM 8891 / ACAM 34), this protein is Replication factor C large subunit.